A 204-amino-acid chain; its full sequence is Large ribosomal subunit protein uL3c (204 aa).

The segment at H126–V155 is disordered.

The protein belongs to the universal ribosomal protein uL3 family. Part of the 50S ribosomal subunit.

Its subcellular location is the plastid. The protein localises to the chloroplast. Its function is as follows. One of the primary rRNA binding proteins, it binds directly near the 3'-end of the 23S rRNA, where it nucleates assembly of the 50S subunit. The protein is Large ribosomal subunit protein uL3c (rpl3) of Guillardia theta (Cryptophyte).